Consider the following 350-residue polypeptide: MSSQTVLVTGGAGYIGSHTVLQLLLGGFKAVVVDNLDNSSETAIHRVKELAGKFAGNLSFHKLDLRDRDALEKIFSSTKFDSVIHFAGLKAVGESVQKPLLYYDNNLIGTIVLFEVMAAHGCKKLVFSSSATVYGLPKEVPCTEEFPLSAANPYGRTKLIIEEICRDIYRAEQEWKIILLRYFNPVGAHPSGYIGEDPRGIPNNLMPFVQQVAVGRRPALTVFGNDYTTSDGTGVRDYIHVVDLADGHIAALRKLNDPKIGCEVYNLGTGKGTSVLEMVKAFEQASGKKIPLVMAGRRPGDAEVVYASTNKAERELNWKAKYGIDEMCRDQWNWASKNPYGYGGSEDSSN.

5–36 (TVLVTGGAGYIGSHTVLQLLLGGFKAVVVDNL) is a binding site for NAD(+). Ser130 contacts substrate. Tyr154 (proton acceptor) is an active-site residue.

Belongs to the NAD(P)-dependent epimerase/dehydratase family. NAD(+) serves as cofactor.

It carries out the reaction UDP-alpha-D-glucose = UDP-alpha-D-galactose. The protein operates within carbohydrate metabolism; galactose metabolism. The chain is UDP-glucose 4-epimerase GEPI48 from Cyamopsis tetragonoloba (Guar).